The following is a 500-amino-acid chain: Replication factor C large subunit (500 aa).

Position 44 to 51 (44 to 51 (GSPGVGKT)) interacts with ATP. The interval 443–500 (HAADDLGASDGETTNASGTASSSGDDGDADGTTDGDGSDANDGNDDDDDGQAGLSDFV) is disordered. Residues 455–466 (TTNASGTASSSG) show a composition bias toward low complexity. The span at 467 to 492 (DDGDADGTTDGDGSDANDGNDDDDDG) shows a compositional bias: acidic residues.

This sequence belongs to the activator 1 small subunits family. RfcL subfamily. In terms of assembly, heteromultimer composed of small subunits (RfcS) and large subunits (RfcL).

Functionally, part of the RFC clamp loader complex which loads the PCNA sliding clamp onto DNA. The sequence is that of Replication factor C large subunit from Halorubrum lacusprofundi (strain ATCC 49239 / DSM 5036 / JCM 8891 / ACAM 34).